The chain runs to 161 residues: Protein-export protein SecB (161 aa).

This sequence belongs to the SecB family. As to quaternary structure, homotetramer, a dimer of dimers. One homotetramer interacts with 1 SecA dimer.

It is found in the cytoplasm. Functionally, one of the proteins required for the normal export of preproteins out of the cell cytoplasm. It is a molecular chaperone that binds to a subset of precursor proteins, maintaining them in a translocation-competent state. It also specifically binds to its receptor SecA. In Shewanella pealeana (strain ATCC 700345 / ANG-SQ1), this protein is Protein-export protein SecB.